The sequence spans 306 residues: Acetyl-coenzyme A carboxylase carboxyl transferase subunit beta (306 aa).

One can recognise a CoA carboxyltransferase N-terminal domain in the interval 25–294 (LWIKCPETGE…TVVGANDDKT (270 aa)).

It belongs to the AccD/PCCB family. As to quaternary structure, acetyl-CoA carboxylase is a heterohexamer composed of biotin carboxyl carrier protein (AccB), biotin carboxylase (AccC) and two subunits each of ACCase subunit alpha (AccA) and ACCase subunit beta (AccD).

The protein resides in the cytoplasm. It carries out the reaction N(6)-carboxybiotinyl-L-lysyl-[protein] + acetyl-CoA = N(6)-biotinyl-L-lysyl-[protein] + malonyl-CoA. The protein operates within lipid metabolism; malonyl-CoA biosynthesis; malonyl-CoA from acetyl-CoA: step 1/1. Component of the acetyl coenzyme A carboxylase (ACC) complex. Biotin carboxylase (BC) catalyzes the carboxylation of biotin on its carrier protein (BCCP) and then the CO(2) group is transferred by the transcarboxylase to acetyl-CoA to form malonyl-CoA. The sequence is that of Acetyl-coenzyme A carboxylase carboxyl transferase subunit beta from Allorhizobium ampelinum (strain ATCC BAA-846 / DSM 112012 / S4) (Agrobacterium vitis (strain S4)).